The following is a 218-amino-acid chain: Stress response regulator protein 1 (218 aa).

The region spanning 90–209 (RFLLVDDNSI…YRVVLDVVDN (120 aa)) is the Response regulatory domain. 4-aspartylphosphate is present on Asp-142.

Required for stress adaptation, morphogenesis and virulence. The protein is Stress response regulator protein 1 (SRR1) of Meyerozyma guilliermondii (strain ATCC 6260 / CBS 566 / DSM 6381 / JCM 1539 / NBRC 10279 / NRRL Y-324) (Yeast).